We begin with the raw amino-acid sequence, 560 residues long: Glucose-6-phosphate isomerase, cytosolic (560 aa).

Ala2 bears the N-acetylalanine mark. The active-site Proton donor is the Glu361. Catalysis depends on residues His392 and Lys517.

Belongs to the GPI family. In terms of assembly, homodimer.

The protein resides in the cytoplasm. It carries out the reaction alpha-D-glucose 6-phosphate = beta-D-fructose 6-phosphate. It participates in carbohydrate degradation; glycolysis; D-glyceraldehyde 3-phosphate and glycerone phosphate from D-glucose: step 2/4. The polypeptide is Glucose-6-phosphate isomerase, cytosolic (PGIC) (Arabidopsis lyrata subsp. petraea (Northern rock-cress)).